Reading from the N-terminus, the 393-residue chain is Phosphoglycerate kinase (393 aa).

Residues 21–23 (DLN), arginine 36, 59–62 (HLGR), arginine 113, and arginine 146 contribute to the substrate site. ATP-binding positions include lysine 197, glutamate 319, and 345–348 (GGDT).

The protein belongs to the phosphoglycerate kinase family. As to quaternary structure, monomer.

It is found in the cytoplasm. It catalyses the reaction (2R)-3-phosphoglycerate + ATP = (2R)-3-phospho-glyceroyl phosphate + ADP. It participates in carbohydrate degradation; glycolysis; pyruvate from D-glyceraldehyde 3-phosphate: step 2/5. This chain is Phosphoglycerate kinase, found in Nitratidesulfovibrio vulgaris (strain ATCC 29579 / DSM 644 / CCUG 34227 / NCIMB 8303 / VKM B-1760 / Hildenborough) (Desulfovibrio vulgaris).